The sequence spans 497 residues: uncharacterized protein (497 aa).

A compositionally biased stretch (basic and acidic residues) spans 44–74 (IRQEKEMKRHDDDGRQYQSDRKFAKSKHDDI). 3 disordered regions span residues 44–95 (IRQE…SVGR), 120–151 (VSRSSSIGHSGSTAPWSSVGRHNRKKDNEHRD), and 195–227 (GNVITPGVTSTTGAPSGKASLSRAASNSSTSAR). Over residues 120 to 131 (VSRSSSIGHSGS) the composition is skewed to low complexity. 3 positions are modified to phosphoserine: serine 123, serine 125, and serine 131. Phosphothreonine is present on threonine 132. A compositionally biased stretch (low complexity) spans 213–227 (ASLSRAASNSSTSAR). Position 258 is a phosphothreonine (threonine 258). Residue serine 310 is modified to Phosphoserine. Residues 367–385 (NVNPSNQDLASVKQPSGFS) are compositionally biased toward polar residues. The interval 367–497 (NVNPSNQDLA…GFPDTSRPPH (131 aa)) is disordered. Low complexity predominate over residues 400 to 409 (NFSNDDSSFF). Serine 436 is modified (phosphoserine). Residues 448–472 (GLSSGASIPSAPPGFGYQQPSFPYS) show a composition bias toward low complexity.

The protein localises to the cytoplasm. It is found in the nucleus. This is an uncharacterized protein from Schizosaccharomyces pombe (strain 972 / ATCC 24843) (Fission yeast).